Here is a 1778-residue protein sequence, read N- to C-terminus: Nuclear receptor corepressor 1 (1778 aa).

In terms of domain architecture, SANT spans 125–176 (DRLEEWSPEERSLFKSRQADHVKIFHGLTEFFVDKTASDLVLFYYMNKKTED). One can recognise a Myb-like domain in the interval 356–398 (WTDDEKTKLVTLINSSPTLDWVSISEGMNRRPNECKMQYDAMN). Positions 409-421 (VDEEDGNGQEEGG) are enriched in acidic residues. 6 disordered regions span residues 409–671 (VDEE…TVST), 992–1024 (SLTP…AGRS), 1195–1218 (KLQQ…ATPQ), 1276–1339 (QHLQ…SRSV), 1414–1434 (PPKT…RTLS), and 1646–1718 (AAPT…PPLP). Composition is skewed to low complexity over residues 431 to 442 (SSAAARRSGLAR) and 450 to 469 (TPRA…VTRA). Residues 478 to 493 (DLGEEIDEMEIEDNDE) are compositionally biased toward acidic residues. Residues 494-513 (DASRGSRGKDSKAPSDRDGS) show a composition bias toward basic and acidic residues. Acidic residues-rich tracts occupy residues 517-545 (MEGD…EEEE) and 599-616 (ESDD…DVDE). Low complexity-rich tracts occupy residues 626–639 (SSSS…SVGG) and 649–671 (LVQQ…TVST). Over residues 1276 to 1285 (QHLQQQQQHH) the composition is skewed to low complexity. Positions 1687–1696 (SSVNSNVSDV) are enriched in low complexity.

This sequence belongs to the N-CoR nuclear receptor corepressors family. In terms of assembly, interacts with gex-3. Interacts (via C-terminus) with nhr-60. As to expression, in larvae, expressed in pharyngeal neurons, ventral and dorsal nerve cords, tail neurons, egg-laying neurons and egg-laying muscles. Detected in the neurons of the pharyngeal nerve ring, head neurons, tail neurons and egg-laying muscles in adults. Detected in male-specific tail ganglia and rays in males.

It is found in the nucleus. Mediates transcriptional repression by certain nuclear receptors. Plays a role in development and neuronal function. May play a role in muscle-specific oxidative mitochondrial metabolism. The chain is Nuclear receptor corepressor 1 from Caenorhabditis elegans.